The primary structure comprises 1388 residues: Rho-associated protein kinase 2 (1388 aa).

The segment at 1-24 (MSRPPPTGKMPGAPEAVSGDGAGA) is disordered. The Protein kinase domain maps to 92–354 (YDVVKVIGRG…VEEIKQHPFF (263 aa)). ATP contacts are provided by residues 98–106 (IGRGAFGEV) and Lys-121. The active-site Proton acceptor is Asp-214. The 69-residue stretch at 357–425 (DQWNWDNIRE…YRENLLLSDS (69 aa)) folds into the AGC-kinase C-terminal domain. The interaction with PPP1R12A stretch occupies residues 363–784 (NIRETAAPVV…INELLKQKDV (422 aa)). The tract at residues 373–420 (PELSSDIDSSNFDDIEDDKGDVETFPIPKAFVGNQLPFIGFTYYRENL) is interaction with NPM1. A Phosphothreonine; by ROCK2 modification is found at Thr-414. One can recognise an REM-1 domain in the interval 497 to 573 (ALRQLEREKA…LDETNALLRT (77 aa)). Basic and acidic residues predominate over residues 512–530 (NAEYQRKADHEADKKRNLE). Residues 512–532 (NAEYQRKADHEADKKRNLEND) form a disordered region. Position 722 is a phosphotyrosine; by SRC (Tyr-722). The 69-residue stretch at 979–1047 (TSDVANLANE…LAEIMNRKEP (69 aa)) folds into the RhoBD domain. An RHOA binding region spans residues 979–1047 (TSDVANLANE…LAEIMNRKEP (69 aa)). Residues 1054-1126 (TDMRRKEKEN…EQLRSQLQAL (73 aa)) adopt a coiled-coil conformation. Ser-1137 is subject to Phosphoserine. In terms of domain architecture, PH spans 1150–1349 (ESRLEGWLSL…WVSRLVKKIP (200 aa)). Thr-1212 carries the post-translational modification Phosphothreonine. Residues 1260–1315 (GHEFIPTLYHFPTNCEACMKPLWHMFKPPPALECRRCHIKCHKDHMDKKEEIIAPC) form a Phorbol-ester/DAG-type zinc finger. Positions 1345–1388 (VKKIPKKPPAPDPFARSSPRTSMKIQQNQSIRRPSRQLAANKPS) are disordered. Phosphoserine occurs at positions 1362 and 1374. Residues 1362–1376 (SPRTSMKIQQNQSIR) are compositionally biased toward polar residues.

The protein belongs to the protein kinase superfamily. AGC Ser/Thr protein kinase family. Homodimer. Interacts with IRS1. Interacts with RAF1. Interacts with RHOA (activated by GTP), RHOB and RHOC. Interacts with PPP1R12A. Interacts with EP300. Interacts with CHORDC1. Interacts with BRCA2. Interacts with NPM1; this interaction enhances ROCK2 activity. Interacts with SORL1. Interacts with PJVK. Mg(2+) serves as cofactor. Post-translationally, autophosphorylated. Phosphorylation at Tyr-722 reduces its binding to RHOA and is crucial for focal adhesion dynamics. Dephosphorylation by PTPN11 stimulates its RHOA binding activity. In terms of processing, cleaved by granzyme B during apoptosis. This leads to constitutive activation of the kinase and membrane blebbing.

Its subcellular location is the cytoplasm. The protein resides in the cell membrane. It localises to the nucleus. It is found in the cytoskeleton. The protein localises to the microtubule organizing center. Its subcellular location is the centrosome. It carries out the reaction L-seryl-[protein] + ATP = O-phospho-L-seryl-[protein] + ADP + H(+). The enzyme catalyses L-threonyl-[protein] + ATP = O-phospho-L-threonyl-[protein] + ADP + H(+). Its activity is regulated as follows. Activated by RHOA binding. Inhibited by Y-27632. Protein kinase which is a key regulator of actin cytoskeleton and cell polarity. Involved in regulation of smooth muscle contraction, actin cytoskeleton organization, stress fiber and focal adhesion formation, neurite retraction, cell adhesion and motility via phosphorylation of ADD1, BRCA2, CNN1, EZR, DPYSL2, EP300, MSN, MYL9/MLC2, NPM1, RDX, PPP1R12A and VIM. Phosphorylates SORL1 and IRF4. Acts as a negative regulator of VEGF-induced angiogenic endothelial cell activation. Positively regulates the activation of p42/MAPK1-p44/MAPK3 and of p90RSK/RPS6KA1 during myogenic differentiation. Plays an important role in the timely initiation of centrosome duplication. Inhibits keratinocyte terminal differentiation. May regulate closure of the eyelids and ventral body wall through organization of actomyosin bundles. Plays a critical role in the regulation of spine and synaptic properties in the hippocampus. Plays an important role in generating the circadian rhythm of the aortic myofilament Ca(2+) sensitivity and vascular contractility by modulating the myosin light chain phosphorylation. This Sus scrofa (Pig) protein is Rho-associated protein kinase 2 (ROCK2).